The following is a 130-amino-acid chain: S-protein homolog 30 (130 aa).

Residues asparagine 64 and asparagine 77 are each glycosylated (N-linked (GlcNAc...) asparagine).

The protein belongs to the plant self-incompatibility (S1) protein family.

It is found in the secreted. This chain is S-protein homolog 30, found in Arabidopsis thaliana (Mouse-ear cress).